The following is a 520-amino-acid chain: Putative tyrosine carboxypeptidase MATCAP2 (520 aa).

The tract at residues 116–153 (EEKKYHSQKQSSSTYSKRCRKPSKSPNTSRSKDPRRMK) is disordered. His-331 serves as a coordination point for Zn(2+). The Nucleophile role is filled by Glu-332. Positions 336 and 367 each coordinate Zn(2+).

Zn(2+) serves as cofactor.

Functionally, putative tyrosine carboxypeptidase. The polypeptide is Putative tyrosine carboxypeptidase MATCAP2 (Homo sapiens (Human)).